We begin with the raw amino-acid sequence, 71 residues long: MIFKVFYQENADEAPVREKTKTLYIEAESERDVRRKLEGRPINIEYIQPLEGAHLEYEKKSPNFQVLEISS.

It belongs to the RNA polymerase subunit epsilon family. In terms of assembly, RNAP is composed of a core of 2 alpha, a beta and a beta' subunit. The core is associated with a delta subunit, and at least one of epsilon or omega. When a sigma factor is associated with the core the holoenzyme is formed, which can initiate transcription.

It carries out the reaction RNA(n) + a ribonucleoside 5'-triphosphate = RNA(n+1) + diphosphate. In terms of biological role, a non-essential component of RNA polymerase (RNAP). The sequence is that of DNA-directed RNA polymerase subunit epsilon from Geobacillus kaustophilus (strain HTA426).